Here is a 747-residue protein sequence, read N- to C-terminus: Nucleolar complex-associated protein 3 (747 aa).

Positions 1–11 (MAARKNQKSPK) are enriched in basic residues. The disordered stretch occupies residues 1 to 142 (MAARKNQKSP…EDEQDYELRP (142 aa)). Residues 74-86 (ENPSSLKYLSSIN) are compositionally biased toward polar residues. Over residues 89–109 (DLGKKVEKGPRPDIYDLKKSQ) the composition is skewed to basic and acidic residues. Position 120 is a phosphoserine (S120). Positions 214 to 234 (KQQIKNDKEALGIQAQQLLEE) form a coiled coil.

The protein belongs to the CBF/MAK21 family.

It is found in the nucleus. Its subcellular location is the nucleolus. Functionally, may be required for synthesis of 60S ribosomal subunits and the transport of pre-ribosomes from the nucleoplasm to the cytoplasm. This Schizosaccharomyces pombe (strain 972 / ATCC 24843) (Fission yeast) protein is Nucleolar complex-associated protein 3 (noc3).